Here is a 1030-residue protein sequence, read N- to C-terminus: Arrestin domain-containing protein F (1030 aa).

Disordered regions lie at residues 1–27 (MEIIKENNENDGENINNIPKKKSGSKR) and 119–154 (ENKNISDNSNFDDGEEDDTDNKKNINNKNNNNNNPL). A compositionally biased stretch (acidic residues) spans 128 to 137 (NFDDGEEDDT). Over residues 142–152 (NINNKNNNNNN) the composition is skewed to low complexity. Coiled coils occupy residues 320-374 (HQLE…HNNN) and 544-577 (QKLNKKDKEKEKEKEKENDNDNENNNSESLIRDQ). Disordered regions lie at residues 539-572 (SPQSPQKLNKKDKEKEKEKEKENDNDNENNNSES) and 885-931 (NNEK…NNNN). Positions 547 to 562 (NKKDKEKEKEKEKEND) are enriched in basic and acidic residues. Positions 910 to 931 (SPSSSSFLSNSSNTSSSKNNNN) are enriched in low complexity.

It belongs to the arrestin family.

The protein is Arrestin domain-containing protein F (adcF) of Dictyostelium discoideum (Social amoeba).